A 266-amino-acid chain; its full sequence is Hydroxyethylthiazole kinase (266 aa).

Methionine 46 is a substrate binding site. ATP contacts are provided by lysine 122 and threonine 166. Glycine 193 lines the substrate pocket.

This sequence belongs to the Thz kinase family. It depends on Mg(2+) as a cofactor.

The enzyme catalyses 5-(2-hydroxyethyl)-4-methylthiazole + ATP = 4-methyl-5-(2-phosphooxyethyl)-thiazole + ADP + H(+). It functions in the pathway cofactor biosynthesis; thiamine diphosphate biosynthesis; 4-methyl-5-(2-phosphoethyl)-thiazole from 5-(2-hydroxyethyl)-4-methylthiazole: step 1/1. Its function is as follows. Catalyzes the phosphorylation of the hydroxyl group of 4-methyl-5-beta-hydroxyethylthiazole (THZ). This Caldivirga maquilingensis (strain ATCC 700844 / DSM 13496 / JCM 10307 / IC-167) protein is Hydroxyethylthiazole kinase.